Consider the following 129-residue polypeptide: Trefoil factor 2 (129 aa).

A signal peptide spans 1–23 (MGPRGLQLLAVLLALGLCAPAGA). At Q24 the chain carries Pyrrolidone carboxylic acid. P-type domains follow at residues 29-73 (CQCS…FHPL) and 79-122 (EQCV…FFPI). 7 disulfides stabilise this stretch: C29–C127, C31–C58, C42–C57, C52–C69, C81–C107, C91–C106, and C101–C118.

The protein localises to the secreted. Its function is as follows. Inhibits gastrointestinal motility and gastric acid secretion. Could function as a structural component of gastric mucus, possibly by stabilizing glycoproteins in the mucus gel through interactions with carbohydrate side chains. This is Trefoil factor 2 (TFF2) from Canis lupus familiaris (Dog).